Here is a 144-residue protein sequence, read N- to C-terminus: Nucleoside diphosphate kinase (144 aa).

ATP contacts are provided by Lys-9, Phe-57, Arg-85, Thr-91, Arg-102, and Asn-112. His-120 serves as the catalytic Pros-phosphohistidine intermediate.

This sequence belongs to the NDK family. In terms of assembly, homotetramer. Mg(2+) is required as a cofactor.

The protein localises to the cytoplasm. The enzyme catalyses a 2'-deoxyribonucleoside 5'-diphosphate + ATP = a 2'-deoxyribonucleoside 5'-triphosphate + ADP. The catalysed reaction is a ribonucleoside 5'-diphosphate + ATP = a ribonucleoside 5'-triphosphate + ADP. Its function is as follows. Major role in the synthesis of nucleoside triphosphates other than ATP. The ATP gamma phosphate is transferred to the NDP beta phosphate via a ping-pong mechanism, using a phosphorylated active-site intermediate. This Streptococcus uberis (strain ATCC BAA-854 / 0140J) protein is Nucleoside diphosphate kinase.